The sequence spans 222 residues: Phosphoribosylformylglycinamidine synthase subunit PurQ (222 aa).

Residues 3 to 222 (SAVIQLPGLN…LFESVLGRAA (220 aa)) enclose the Glutamine amidotransferase type-1 domain. Residue cysteine 86 is the Nucleophile of the active site. Residues histidine 196 and glutamate 198 contribute to the active site.

As to quaternary structure, part of the FGAM synthase complex composed of 1 PurL, 1 PurQ and 2 PurS subunits.

The protein localises to the cytoplasm. It catalyses the reaction N(2)-formyl-N(1)-(5-phospho-beta-D-ribosyl)glycinamide + L-glutamine + ATP + H2O = 2-formamido-N(1)-(5-O-phospho-beta-D-ribosyl)acetamidine + L-glutamate + ADP + phosphate + H(+). It carries out the reaction L-glutamine + H2O = L-glutamate + NH4(+). It participates in purine metabolism; IMP biosynthesis via de novo pathway; 5-amino-1-(5-phospho-D-ribosyl)imidazole from N(2)-formyl-N(1)-(5-phospho-D-ribosyl)glycinamide: step 1/2. Part of the phosphoribosylformylglycinamidine synthase complex involved in the purines biosynthetic pathway. Catalyzes the ATP-dependent conversion of formylglycinamide ribonucleotide (FGAR) and glutamine to yield formylglycinamidine ribonucleotide (FGAM) and glutamate. The FGAM synthase complex is composed of three subunits. PurQ produces an ammonia molecule by converting glutamine to glutamate. PurL transfers the ammonia molecule to FGAR to form FGAM in an ATP-dependent manner. PurS interacts with PurQ and PurL and is thought to assist in the transfer of the ammonia molecule from PurQ to PurL. The sequence is that of Phosphoribosylformylglycinamidine synthase subunit PurQ from Chelativorans sp. (strain BNC1).